The chain runs to 184 residues: FMRFamide-related peptides (184 aa).

A propeptide spanning residues 1–44 is cleaved from the precursor; it reads MLVSSSVLKDDSSLRIFKESPNEFEYIIKRHDMDDRKEDTESKE. At F56 the chain carries Phenylalanine amide. A propeptide spanning residues 59–83 is cleaved from the precursor; the sequence is GQSFFNNLDNSAFDNEIDSKVSRHP. Position 94 is a phenylalanine amide (F94). Residues 97 to 107 constitute a propeptide that is removed on maturation; that stretch reads SGMKSTNDEQP. F119 is subject to Phenylalanine amide. Positions 122–184 are excised as a propeptide; the sequence is NIQIVPTDFD…SLETNSNHRE (63 aa).

It belongs to the FARP (FMRFamide related peptide) family. Expressed throughout the central nervous system.

The protein resides in the secreted. Functionally, in insects, FMRFamide and related peptides have modulatory actions at skeletal neuromuscular junctions, and peptides that are immunologically related to FMRFamide are released into the circulation from neurohemal organs. The protein is FMRFamide-related peptides of Camponotus floridanus (Florida carpenter ant).